The sequence spans 364 residues: uncharacterized protein (364 aa).

The next 3 helical transmembrane spans lie at 41–61, 298–318, and 329–349; these read NIFT…FFGL, VIYI…ITYM, and LLFY…SIII.

It is found in the membrane. This is an uncharacterized protein from Mycoplasma capricolum subsp. capricolum (strain California kid / ATCC 27343 / NCTC 10154).